The primary structure comprises 124 residues: Small ribosomal subunit protein uS13 (124 aa).

Residues 95 to 124 are disordered; that stretch reads GLPVRGQRTKTNARTRKGPKRTIAGKKKAK.

This sequence belongs to the universal ribosomal protein uS13 family. In terms of assembly, part of the 30S ribosomal subunit. Forms a loose heterodimer with protein S19. Forms two bridges to the 50S subunit in the 70S ribosome.

Located at the top of the head of the 30S subunit, it contacts several helices of the 16S rRNA. In the 70S ribosome it contacts the 23S rRNA (bridge B1a) and protein L5 of the 50S subunit (bridge B1b), connecting the 2 subunits; these bridges are implicated in subunit movement. Contacts the tRNAs in the A and P-sites. In Rhodococcus erythropolis (strain PR4 / NBRC 100887), this protein is Small ribosomal subunit protein uS13.